Here is a 647-residue protein sequence, read N- to C-terminus: DNA ligase (647 aa).

Residues 30–34, 79–80, and Glu-105 each bind NAD(+); these read DEEYD and SM. The N6-AMP-lysine intermediate role is filled by Lys-107. Positions 128, 162, and 301 each coordinate NAD(+). Residues Cys-395, Cys-398, Cys-411, and Cys-416 each contribute to the Zn(2+) site. Residues 570-647 form the BRCT domain; sequence KSDGVIFGKT…ESAFNELVKE (78 aa).

The protein belongs to the NAD-dependent DNA ligase family. LigA subfamily. It depends on Mg(2+) as a cofactor. The cofactor is Mn(2+).

It carries out the reaction NAD(+) + (deoxyribonucleotide)n-3'-hydroxyl + 5'-phospho-(deoxyribonucleotide)m = (deoxyribonucleotide)n+m + AMP + beta-nicotinamide D-nucleotide.. DNA ligase that catalyzes the formation of phosphodiester linkages between 5'-phosphoryl and 3'-hydroxyl groups in double-stranded DNA using NAD as a coenzyme and as the energy source for the reaction. It is essential for DNA replication and repair of damaged DNA. The protein is DNA ligase of Campylobacter jejuni subsp. jejuni serotype O:2 (strain ATCC 700819 / NCTC 11168).